Here is a 523-residue protein sequence, read N- to C-terminus: F-box only protein 31-B (523 aa).

One can recognise an F-box domain in the interval 59–105; sequence PRSLLQLPPEILVEIFSSLPGTELPSLAQVCRKFRQILTTDTIWKRR. 4 residues coordinate Zn(2+): cysteine 201, histidine 209, cysteine 225, and histidine 231. A disordered region spans residues 372-427; that stretch reads IQREQRQTGNEEDDGKGAGPDRAEHSQQPAPVHRPAKEDVNGVDNADDREQKPPNV. 2 stretches are compositionally biased toward basic and acidic residues: residues 386–396 and 406–423; these read GKGAGPDRAEH and PAKE…REQK.

It belongs to the FBXO31 family. As to quaternary structure, part of a SCF (SKP1-cullin-F-box) protein ligase complex SCF(FBXO31).

The protein localises to the cytoplasm. Its pathway is protein modification; protein ubiquitination. In terms of biological role, substrate-recognition component of the SCF(FBXO31) protein ligase complex, which specifically mediates the ubiquitination of proteins amidated at their C-terminus in response to oxidative stress, leading to their degradation by the proteasome. Fbxo31 specifically recognizes and binds C-terminal peptides bearing an amide: C-terminal amidation in response to oxidative stress takes place following protein fragmentation. The SCF(FBXO31) also plays a role in G1 arrest following DNA damage by mediating ubiquitination of phosphorylated cyclin-D1 (ccnd1), promoting its degradation by the proteasome, resulting in G1 arrest. The SCF(FBXO31) complex is however not a major regulator of ccnd1 stability during the G1/S transition. This chain is F-box only protein 31-B (fbxo31-b), found in Xenopus laevis (African clawed frog).